The chain runs to 256 residues: MVKSHIGSWILVLFVAMWSDVGLCKKRPKPGGGWNTGGSRYPGQGSPGGNRYPPQGGGGWGQPHGGGWGQPHGGGWGQPHGGGWGQPHGGGGWGQGGTHSQWNKPSKPKTNMKHVAGAAAAGAVVGGLGGYMLGSAMNRPLIHFGNDYEDRYYRENMYRYPNQVYYRPVDQYNNQNTFVHDCVNITVKQHTVTTTTKGENFTETDIKMMERVVEQMCITQYQRESQAYYQRGASVILFSSPPVILLISFLIFLIVG.

A signal peptide spans 1–24 (MVKSHIGSWILVLFVAMWSDVGLC). The segment at 25 to 233 (KKRPKPGGGW…ESQAYYQRGA (209 aa)) is interaction with GRB2, ERI3 and SYN1. The tract at residues 28-110 (PKPGGGWNTG…QWNKPSKPKT (83 aa)) is disordered. Tandem repeats lie at residues 54-62 (PQGGGGWGQ), 63-70 (PHGGGWGQ), 71-78 (PHGGGWGQ), 79-86 (PHGGGWGQ), and 87-95 (PHGGGGWGQ). Residues 54–95 (PQGGGGWGQPHGGGWGQPHGGGWGQPHGGGWGQPHGGGGWGQ) are 5 X 8 AA tandem repeats of P-H-G-G-G-W-G-Q. The span at 55–97 (QGGGGWGQPHGGGWGQPHGGGWGQPHGGGWGQPHGGGGWGQGG) shows a compositional bias: gly residues. Cu(2+) is bound by residues H64, G65, G66, H72, G73, G74, H80, G81, G82, H88, G90, and G91. A disulfide bond links C182 and C217. Residues N184 and N200 are each glycosylated (N-linked (GlcNAc...) asparagine). A233 carries GPI-anchor amidated alanine lipidation. A propeptide spans 234 to 256 (SVILFSSPPVILLISFLIFLIVG) (removed in mature form).

This sequence belongs to the prion family. As to quaternary structure, monomer and homodimer. Has a tendency to aggregate into amyloid fibrils containing a cross-beta spine, formed by a steric zipper of superposed beta-strands. Soluble oligomers may represent an intermediate stage on the path to fibril formation. Copper binding may promote oligomerization. Interacts with GRB2, APP, ERI3/PRNPIP and SYN1. Mislocalized cytosolically exposed PrP interacts with MGRN1; this interaction alters MGRN1 subcellular location and causes lysosomal enlargement. Interacts with KIAA1191.

The protein localises to the cell membrane. The protein resides in the golgi apparatus. Its function is as follows. Its primary physiological function is unclear. Has cytoprotective activity against internal or environmental stresses. May play a role in neuronal development and synaptic plasticity. May be required for neuronal myelin sheath maintenance. May play a role in iron uptake and iron homeostasis. Soluble oligomers are toxic to cultured neuroblastoma cells and induce apoptosis (in vitro). Association with GPC1 (via its heparan sulfate chains) targets PRNP to lipid rafts. Also provides Cu(2+) or Zn(2+) for the ascorbate-mediated GPC1 deaminase degradation of its heparan sulfate side chains. This is Major prion protein (PRNP) from Odocoileus hemionus (Mule deer).